A 567-amino-acid chain; its full sequence is 2-succinyl-5-enolpyruvyl-6-hydroxy-3-cyclohexene-1-carboxylate synthase (567 aa).

This sequence belongs to the TPP enzyme family. MenD subfamily. In terms of assembly, homodimer. It depends on Mg(2+) as a cofactor. The cofactor is Mn(2+). Thiamine diphosphate is required as a cofactor.

The enzyme catalyses isochorismate + 2-oxoglutarate + H(+) = 5-enolpyruvoyl-6-hydroxy-2-succinyl-cyclohex-3-ene-1-carboxylate + CO2. It functions in the pathway quinol/quinone metabolism; 1,4-dihydroxy-2-naphthoate biosynthesis; 1,4-dihydroxy-2-naphthoate from chorismate: step 2/7. It participates in quinol/quinone metabolism; menaquinone biosynthesis. Its function is as follows. Catalyzes the thiamine diphosphate-dependent decarboxylation of 2-oxoglutarate and the subsequent addition of the resulting succinic semialdehyde-thiamine pyrophosphate anion to isochorismate to yield 2-succinyl-5-enolpyruvyl-6-hydroxy-3-cyclohexene-1-carboxylate (SEPHCHC). The chain is 2-succinyl-5-enolpyruvyl-6-hydroxy-3-cyclohexene-1-carboxylate synthase from Yersinia pseudotuberculosis serotype IB (strain PB1/+).